The primary structure comprises 204 residues: ATP phosphoribosyltransferase (204 aa).

Belongs to the ATP phosphoribosyltransferase family. Short subfamily. As to quaternary structure, heteromultimer composed of HisG and HisZ subunits.

It localises to the cytoplasm. The enzyme catalyses 1-(5-phospho-beta-D-ribosyl)-ATP + diphosphate = 5-phospho-alpha-D-ribose 1-diphosphate + ATP. It participates in amino-acid biosynthesis; L-histidine biosynthesis; L-histidine from 5-phospho-alpha-D-ribose 1-diphosphate: step 1/9. Catalyzes the condensation of ATP and 5-phosphoribose 1-diphosphate to form N'-(5'-phosphoribosyl)-ATP (PR-ATP). Has a crucial role in the pathway because the rate of histidine biosynthesis seems to be controlled primarily by regulation of HisG enzymatic activity. The sequence is that of ATP phosphoribosyltransferase from Staphylococcus aureus (strain MRSA252).